A 66-amino-acid chain; its full sequence is Potassium channel toxin alpha-KTx (66 aa).

Residues 1 to 21 (MNTKVVLIMLMITSVILVVEA) form the signal peptide. Intrachain disulfides connect Cys-29–Cys-49, Cys-35–Cys-59, Cys-39–Cys-61, and Cys-44–Cys-64.

The protein belongs to the short scorpion toxin superfamily. Potassium channel inhibitor family. As to expression, expressed by the venom gland.

It is found in the secreted. In terms of biological role, blocks voltage-gated potassium channels. This Hoffmannihadrurus gertschi (Scorpion) protein is Potassium channel toxin alpha-KTx.